A 166-amino-acid chain; its full sequence is UPF0178 protein BPUM_2255 (166 aa).

It belongs to the UPF0178 family.

The polypeptide is UPF0178 protein BPUM_2255 (Bacillus pumilus (strain SAFR-032)).